The primary structure comprises 32 residues: U3-theraphotoxin-Hhn1r (32 aa).

Cystine bridges form between cysteine 2–cysteine 15, cysteine 9–cysteine 20, and cysteine 14–cysteine 27.

It belongs to the neurotoxin 10 (Hwtx-1) family. 16 (Hntx-8) subfamily. In terms of tissue distribution, expressed by the venom gland.

Its subcellular location is the secreted. Functionally, ion channel inhibitor. The sequence is that of U3-theraphotoxin-Hhn1r from Cyriopagopus hainanus (Chinese bird spider).